Consider the following 337-residue polypeptide: Phenylalanine--tRNA ligase alpha subunit (337 aa).

Glu252 is a Mg(2+) binding site.

The protein belongs to the class-II aminoacyl-tRNA synthetase family. Phe-tRNA synthetase alpha subunit type 1 subfamily. In terms of assembly, tetramer of two alpha and two beta subunits. Requires Mg(2+) as cofactor.

The protein resides in the cytoplasm. It carries out the reaction tRNA(Phe) + L-phenylalanine + ATP = L-phenylalanyl-tRNA(Phe) + AMP + diphosphate + H(+). The chain is Phenylalanine--tRNA ligase alpha subunit from Francisella philomiragia subsp. philomiragia (strain ATCC 25017 / CCUG 19701 / FSC 153 / O#319-036).